Here is a 248-residue protein sequence, read N- to C-terminus: Ribonuclease PH (248 aa).

Residues Arg-86 and 124–126 (GTR) contribute to the phosphate site.

This sequence belongs to the RNase PH family. As to quaternary structure, homohexameric ring arranged as a trimer of dimers.

The enzyme catalyses tRNA(n+1) + phosphate = tRNA(n) + a ribonucleoside 5'-diphosphate. Functionally, phosphorolytic 3'-5' exoribonuclease that plays an important role in tRNA 3'-end maturation. Removes nucleotide residues following the 3'-CCA terminus of tRNAs; can also add nucleotides to the ends of RNA molecules by using nucleoside diphosphates as substrates, but this may not be physiologically important. Probably plays a role in initiation of 16S rRNA degradation (leading to ribosome degradation) during starvation. This chain is Ribonuclease PH, found in Listeria innocua serovar 6a (strain ATCC BAA-680 / CLIP 11262).